The sequence spans 487 residues: Siroheme synthase (487 aa).

Positions 1 to 203 are precorrin-2 dehydrogenase /sirohydrochlorin ferrochelatase; sequence MNTFPLFFKL…GRSVEAEQAL (203 aa). Residues 22 to 23 and 43 to 44 each bind NAD(+); these read EV and PQ. Phosphoserine is present on serine 128. The uroporphyrinogen-III C-methyltransferase stretch occupies residues 229–487; sequence GEVYIVGAGP…DQQAHALNML (259 aa). Proline 238 contributes to the S-adenosyl-L-methionine binding site. The Proton acceptor role is filled by aspartate 261. Lysine 283 serves as the catalytic Proton donor. Residues 314–316, valine 319, 344–345, methionine 396, and alanine 425 contribute to the S-adenosyl-L-methionine site; these read GGD and TA.

This sequence in the N-terminal section; belongs to the precorrin-2 dehydrogenase / sirohydrochlorin ferrochelatase family. In the C-terminal section; belongs to the precorrin methyltransferase family.

The catalysed reaction is uroporphyrinogen III + 2 S-adenosyl-L-methionine = precorrin-2 + 2 S-adenosyl-L-homocysteine + H(+). The enzyme catalyses precorrin-2 + NAD(+) = sirohydrochlorin + NADH + 2 H(+). It carries out the reaction siroheme + 2 H(+) = sirohydrochlorin + Fe(2+). The protein operates within cofactor biosynthesis; adenosylcobalamin biosynthesis; precorrin-2 from uroporphyrinogen III: step 1/1. It functions in the pathway cofactor biosynthesis; adenosylcobalamin biosynthesis; sirohydrochlorin from precorrin-2: step 1/1. Its pathway is porphyrin-containing compound metabolism; siroheme biosynthesis; precorrin-2 from uroporphyrinogen III: step 1/1. It participates in porphyrin-containing compound metabolism; siroheme biosynthesis; siroheme from sirohydrochlorin: step 1/1. The protein operates within porphyrin-containing compound metabolism; siroheme biosynthesis; sirohydrochlorin from precorrin-2: step 1/1. Multifunctional enzyme that catalyzes the SAM-dependent methylations of uroporphyrinogen III at position C-2 and C-7 to form precorrin-2 via precorrin-1. Then it catalyzes the NAD-dependent ring dehydrogenation of precorrin-2 to yield sirohydrochlorin. Finally, it catalyzes the ferrochelation of sirohydrochlorin to yield siroheme. The protein is Siroheme synthase of Psychrobacter sp. (strain PRwf-1).